The following is a 144-amino-acid chain: Glycine-rich protein DC9.1 (144 aa).

A helical transmembrane segment spans residues 5–25; the sequence is IFLLLGLSIAFAILISSEVAA. 11 repeat units span residues 37–42, 43–48, 50–55, 56–61, 63–68, 69–74, 76–81, 82–87, 89–94, 102–107, and 108–113. Residues 37-113 are 11 X 6 AA tandem repeats of G-Y-[NH]-N-G -G; sequence GYNNGGGYHN…NNGGGHHGGG (77 aa).

Belongs to the GRP family.

It localises to the membrane. This Daucus carota (Wild carrot) protein is Glycine-rich protein DC9.1.